The sequence spans 290 residues: 4-diphosphocytidyl-2-C-methyl-D-erythritol kinase (290 aa).

K10 is a catalytic residue. Residue 96–106 (PIAAGLGGGSS) coordinates ATP. The active site involves D138.

Belongs to the GHMP kinase family. IspE subfamily.

The catalysed reaction is 4-CDP-2-C-methyl-D-erythritol + ATP = 4-CDP-2-C-methyl-D-erythritol 2-phosphate + ADP + H(+). The protein operates within isoprenoid biosynthesis; isopentenyl diphosphate biosynthesis via DXP pathway; isopentenyl diphosphate from 1-deoxy-D-xylulose 5-phosphate: step 3/6. Its function is as follows. Catalyzes the phosphorylation of the position 2 hydroxy group of 4-diphosphocytidyl-2C-methyl-D-erythritol. In Caulobacter vibrioides (strain NA1000 / CB15N) (Caulobacter crescentus), this protein is 4-diphosphocytidyl-2-C-methyl-D-erythritol kinase.